We begin with the raw amino-acid sequence, 68 residues long: Putative membrane protein insertion efficiency factor (68 aa).

It belongs to the UPF0161 family.

The protein localises to the cell inner membrane. Functionally, could be involved in insertion of integral membrane proteins into the membrane. The protein is Putative membrane protein insertion efficiency factor of Persephonella marina (strain DSM 14350 / EX-H1).